The following is a 149-amino-acid chain: IQ domain-containing protein F5 (149 aa).

IQ domains follow at residues 12–41 (ENKA…RAWI) and 68–97 (QEWA…AVRI).

In Bos taurus (Bovine), this protein is IQ domain-containing protein F5 (IQCF5).